The primary structure comprises 215 residues: Large ribosomal subunit protein mL43 (215 aa).

It belongs to the mitochondrion-specific ribosomal protein mL43 family. In terms of assembly, component of the mitochondrial large ribosomal subunit (mt-LSU). Mature mammalian 55S mitochondrial ribosomes consist of a small (28S) and a large (39S) subunit. The 28S small subunit contains a 12S ribosomal RNA (12S mt-rRNA) and 30 different proteins. The 39S large subunit contains a 16S rRNA (16S mt-rRNA), a copy of mitochondrial valine transfer RNA (mt-tRNA(Val)), which plays an integral structural role, and 52 different proteins. High relative levels in skeletal muscle and testis. Lower levels of expression in the heart, brain, placenta, lung, liver, kidney, pancreas, spleen, thymus, prostate, ovary, small intestine, colon and leukocytes. Expression is coregulated with TWNK.

It localises to the mitochondrion. The protein is Large ribosomal subunit protein mL43 (MRPL43) of Homo sapiens (Human).